The primary structure comprises 341 residues: LIM and senescent cell antigen-like-containing domain protein 2 (341 aa).

LIM zinc-binding domains are found at residues 13-74, 76-133, 138-195, 196-255, and 256-315; these read AVCQ…LFAP, CGSC…EKAK, YICQ…KMGV, PICG…LFGD, and VCYN…FPLE. The residue at position 22 (phenylalanine 22) is a Phosphoserine. A Phosphothreonine modification is found at threonine 327. At serine 328 the chain carries Phosphoserine.

Interacts with TGFB1I1. Interacts with integrin-linked protein kinase 1 (ILK) via the first LIM domain, and in competition with LIMS1. Part of the heterotrimeric IPP complex composed of integrin-linked kinase (ILK), LIMS1 or LIMS2, and PARVA.

It localises to the nucleus. It is found in the cell junction. The protein resides in the focal adhesion. The protein localises to the cell membrane. In terms of biological role, adapter protein in a cytoplasmic complex linking beta-integrins to the actin cytoskeleton, bridges the complex to cell surface receptor tyrosine kinases and growth factor receptors. Plays a role in modulating cell spreading and migration. The chain is LIM and senescent cell antigen-like-containing domain protein 2 (LIMS2) from Homo sapiens (Human).